Reading from the N-terminus, the 682-residue chain is Potassium-transporting ATPase ATP-binding subunit (682 aa).

Helical transmembrane passes span 34-54, 62-82, 219-239, and 254-274; these read PVMFIVWIGSLLTTCISIAMA, ALFSAAISGWLWVTVLFANFA, IALTILLIALTIVFLLATATL, and VLVALLVCLIPTTIGGLLSAI. D307 (4-aspartylphosphate intermediate) is an active-site residue. ATP is bound by residues D344, E348, 377 to 384, and K395; that span reads FTAQSRMS. Residues D518 and D522 each contribute to the Mg(2+) site. A run of 3 helical transmembrane segments spans residues 588 to 608, 616 to 636, and 656 to 676; these read FAIIPAAFAATYPQLNALNIM, AILSAVIFNALIIVFLIPLAL, and IYGLGGLLVPFIGIKVIDLLL.

This sequence belongs to the cation transport ATPase (P-type) (TC 3.A.3) family. Type IA subfamily. As to quaternary structure, the system is composed of three essential subunits: KdpA, KdpB and KdpC.

The protein resides in the cell inner membrane. It carries out the reaction K(+)(out) + ATP + H2O = K(+)(in) + ADP + phosphate + H(+). In terms of biological role, part of the high-affinity ATP-driven potassium transport (or Kdp) system, which catalyzes the hydrolysis of ATP coupled with the electrogenic transport of potassium into the cytoplasm. This subunit is responsible for energy coupling to the transport system and for the release of the potassium ions to the cytoplasm. In Shigella sonnei (strain Ss046), this protein is Potassium-transporting ATPase ATP-binding subunit.